The primary structure comprises 113 residues: Carrot ABA-induced in somatic embryos 3 (113 aa).

Composition is skewed to basic and acidic residues over residues 1-17 (MASG…RAKQ), 32-52 (EAQE…KEQL), and 65-77 (GETR…KEGY). The segment at 1–113 (MASGQEKRSE…IDQSKFRTKS (113 aa)) is disordered.

This sequence belongs to the small hydrophilic plant seed protein family. In terms of tissue distribution, expressed in embryogenic cells, somatic embryos and seeds at the later stages of development. Not detected in leaves.

The protein is Carrot ABA-induced in somatic embryos 3 of Daucus carota (Wild carrot).